The following is a 492-amino-acid chain: MMGAKVVTGRSTTQGLAQQHGGVSNVVETPFNQASCCGPVSWTSGCHSLTESRCSRLLYILLHVGASAICCLLLSKTVVERVWGKAHGIQMPSVLCAHLFGSSDCPVLSGSGAVYRVCAGTATFHLLQAVLLVRLHSPTNPRAQLHNSFWSLKLLFLLGLCVVAFCIPDEDLFPAWHYIGICGGFTFILLQLVLITAFAQSWNKNWQTGAAQDCSWLLGVSLATLGFYSMAGVGAVLLFHQYTHPDGCLLNKMLLSLHLCFCGLLSLLSIAPCIRRKQPNSGLLQASIISCYIMYLTFSALSSRPPETITFQGQNHTLCLPGRNKMEPQIPDTSVAVFSAGIMYACVLFACNEASYLAELFGPLWIIKVYKYEFQKPSVCFCCPQTVEPEDGQRSRARSADQETPPAAQVQSQHLSYSYSGFHFAFFLASLYVMVTLTNWFSYEEAELEKTFTKGSWATFWVKVASCWACVLLYLGLLLAPLLAPHSESPPP.

10 helical membrane passes run 59 to 79 (YILL…KTVV), 113 to 133 (AVYR…VLLV), 148 to 168 (SFWS…FCIP), 179 to 199 (IGIC…TAFA), 219 to 239 (GVSL…VLLF), 254 to 274 (LLSL…APCI), 281 to 301 (SGLL…FSAL), 330 to 350 (IPDT…VLFA), 421 to 441 (GFHF…TNWF), and 464 to 484 (VASC…PLLA).

Belongs to the TDE1 family.

Its subcellular location is the membrane. In terms of biological role, incorporates a polar amino acid serine into membranes and facilitates the synthesis of two serine-derived lipids, phosphatidylserine and sphingolipids. This chain is Serine incorporator 4 (Serinc4), found in Mus musculus (Mouse).